Here is a 391-residue protein sequence, read N- to C-terminus: Outer membrane protein 41 (391 aa).

Residues 1–20 (MKVKYLMLTLVGAIALNASA) form the signal peptide. Gln21 is subject to Pyrrolidone carboxylic acid. In terms of domain architecture, OmpA-like spans 282 to 391 (TKTENILTEK…WNRVVIVRSK (110 aa)).

Belongs to the outer membrane OOP (TC 1.B.6) superfamily. As to quaternary structure, disulfide-linked heterodimer with Omp40.

It localises to the cell outer membrane. May have porin activity and function in peptidoglycan binding. This Porphyromonas gingivalis (strain ATCC BAA-308 / W83) protein is Outer membrane protein 41.